The chain runs to 398 residues: Trans-2-enoyl-CoA reductase [NADH] (398 aa).

NAD(+) is bound by residues 47-52 (GASSGF), 74-75 (YE), 111-112 (DA), and 139-140 (LA). Tyrosine 225 provides a ligand contact to substrate. The active-site Proton donor is tyrosine 235. Residues lysine 244 and 274 to 276 (LVT) each bind NAD(+).

The protein belongs to the TER reductase family. As to quaternary structure, monomer.

The catalysed reaction is a 2,3-saturated acyl-CoA + NAD(+) = a (2E)-enoyl-CoA + NADH + H(+). The protein operates within lipid metabolism; fatty acid biosynthesis. Its function is as follows. Involved in the fatty acid synthesis (FAS II). Catalyzes the reduction of the carbon-carbon double bond of crotonyl-CoA to yield butyryl-CoA. This is Trans-2-enoyl-CoA reductase [NADH] from Clostridium acetobutylicum (strain ATCC 824 / DSM 792 / JCM 1419 / IAM 19013 / LMG 5710 / NBRC 13948 / NRRL B-527 / VKM B-1787 / 2291 / W).